Here is a 105-residue protein sequence, read N- to C-terminus: Heat shock protein HspQ (105 aa).

The protein belongs to the HspQ family.

The protein localises to the cytoplasm. Its function is as follows. Involved in the degradation of certain denaturated proteins, including DnaA, during heat shock stress. The chain is Heat shock protein HspQ from Blochmanniella pennsylvanica (strain BPEN).